Reading from the N-terminus, the 228-residue chain is Phosphoribosylformylglycinamidine synthase subunit PurQ (228 aa).

Residues 3-226 form the Glutamine amidotransferase type-1 domain; sequence FAVIVFPGSN…IANWRDSYAI (224 aa). The active-site Nucleophile is C87. Catalysis depends on residues H195 and E197.

As to quaternary structure, part of the FGAM synthase complex composed of 1 PurL, 1 PurQ and 2 PurS subunits.

The protein localises to the cytoplasm. It catalyses the reaction N(2)-formyl-N(1)-(5-phospho-beta-D-ribosyl)glycinamide + L-glutamine + ATP + H2O = 2-formamido-N(1)-(5-O-phospho-beta-D-ribosyl)acetamidine + L-glutamate + ADP + phosphate + H(+). It carries out the reaction L-glutamine + H2O = L-glutamate + NH4(+). The protein operates within purine metabolism; IMP biosynthesis via de novo pathway; 5-amino-1-(5-phospho-D-ribosyl)imidazole from N(2)-formyl-N(1)-(5-phospho-D-ribosyl)glycinamide: step 1/2. Its function is as follows. Part of the phosphoribosylformylglycinamidine synthase complex involved in the purines biosynthetic pathway. Catalyzes the ATP-dependent conversion of formylglycinamide ribonucleotide (FGAR) and glutamine to yield formylglycinamidine ribonucleotide (FGAM) and glutamate. The FGAM synthase complex is composed of three subunits. PurQ produces an ammonia molecule by converting glutamine to glutamate. PurL transfers the ammonia molecule to FGAR to form FGAM in an ATP-dependent manner. PurS interacts with PurQ and PurL and is thought to assist in the transfer of the ammonia molecule from PurQ to PurL. This chain is Phosphoribosylformylglycinamidine synthase subunit PurQ, found in Oceanobacillus iheyensis (strain DSM 14371 / CIP 107618 / JCM 11309 / KCTC 3954 / HTE831).